The chain runs to 622 residues: Threonine--tRNA ligase (622 aa).

The interval 1 to 134 (MKTLLIHSDY…GHPLSELSRK (134 aa)) is editing domain. Residues 199-498 (PHVKYIKEKE…TLEDKPPALP (300 aa)) form a catalytic region. Cysteine 291, histidine 343, and histidine 467 together coordinate Zn(2+).

Belongs to the class-II aminoacyl-tRNA synthetase family. As to quaternary structure, homodimer. Requires Zn(2+) as cofactor.

It localises to the cytoplasm. The catalysed reaction is tRNA(Thr) + L-threonine + ATP = L-threonyl-tRNA(Thr) + AMP + diphosphate + H(+). Catalyzes the attachment of threonine to tRNA(Thr) in a two-step reaction: L-threonine is first activated by ATP to form Thr-AMP and then transferred to the acceptor end of tRNA(Thr). Also edits incorrectly charged L-seryl-tRNA(Thr). This chain is Threonine--tRNA ligase, found in Methanococcus vannielii (strain ATCC 35089 / DSM 1224 / JCM 13029 / OCM 148 / SB).